The chain runs to 394 residues: Phosphoglycerate kinase (394 aa).

Residues 21 to 23 (DLN), Arg-37, 60 to 63 (HLGR), Arg-115, and Arg-148 each bind substrate. Residues Lys-199, Glu-321, and 347–350 (GGDT) contribute to the ATP site.

It belongs to the phosphoglycerate kinase family. In terms of assembly, monomer.

It localises to the cytoplasm. The catalysed reaction is (2R)-3-phosphoglycerate + ATP = (2R)-3-phospho-glyceroyl phosphate + ADP. Its pathway is carbohydrate degradation; glycolysis; pyruvate from D-glyceraldehyde 3-phosphate: step 2/5. The chain is Phosphoglycerate kinase from Aromatoleum aromaticum (strain DSM 19018 / LMG 30748 / EbN1) (Azoarcus sp. (strain EbN1)).